The chain runs to 238 residues: 2-C-methyl-D-erythritol 4-phosphate cytidylyltransferase (238 aa).

It belongs to the IspD/TarI cytidylyltransferase family. IspD subfamily.

The catalysed reaction is 2-C-methyl-D-erythritol 4-phosphate + CTP + H(+) = 4-CDP-2-C-methyl-D-erythritol + diphosphate. It functions in the pathway isoprenoid biosynthesis; isopentenyl diphosphate biosynthesis via DXP pathway; isopentenyl diphosphate from 1-deoxy-D-xylulose 5-phosphate: step 2/6. Functionally, catalyzes the formation of 4-diphosphocytidyl-2-C-methyl-D-erythritol from CTP and 2-C-methyl-D-erythritol 4-phosphate (MEP). The protein is 2-C-methyl-D-erythritol 4-phosphate cytidylyltransferase of Aliivibrio fischeri (strain ATCC 700601 / ES114) (Vibrio fischeri).